The primary structure comprises 273 residues: Putative pyruvate, phosphate dikinase regulatory protein (273 aa).

An ADP-binding site is contributed by 149–156 (GPSRTSKT).

Belongs to the pyruvate, phosphate/water dikinase regulatory protein family. PDRP subfamily.

The catalysed reaction is N(tele)-phospho-L-histidyl/L-threonyl-[pyruvate, phosphate dikinase] + ADP = N(tele)-phospho-L-histidyl/O-phospho-L-threonyl-[pyruvate, phosphate dikinase] + AMP + H(+). The enzyme catalyses N(tele)-phospho-L-histidyl/O-phospho-L-threonyl-[pyruvate, phosphate dikinase] + phosphate + H(+) = N(tele)-phospho-L-histidyl/L-threonyl-[pyruvate, phosphate dikinase] + diphosphate. In terms of biological role, bifunctional serine/threonine kinase and phosphorylase involved in the regulation of the pyruvate, phosphate dikinase (PPDK) by catalyzing its phosphorylation/dephosphorylation. The polypeptide is Putative pyruvate, phosphate dikinase regulatory protein (Rickettsia bellii (strain RML369-C)).